The primary structure comprises 427 residues: Enolase (427 aa).

A (2R)-2-phosphoglycerate-binding site is contributed by Gln163. Catalysis depends on Glu205, which acts as the Proton donor. The Mg(2+) site is built by Asp242, Glu285, and Asp312. 4 residues coordinate (2R)-2-phosphoglycerate: Lys337, Arg366, Ser367, and Lys388. Residue Lys337 is the Proton acceptor of the active site.

This sequence belongs to the enolase family. It depends on Mg(2+) as a cofactor.

It localises to the cytoplasm. The protein resides in the secreted. It is found in the cell surface. It catalyses the reaction (2R)-2-phosphoglycerate = phosphoenolpyruvate + H2O. Its pathway is carbohydrate degradation; glycolysis; pyruvate from D-glyceraldehyde 3-phosphate: step 4/5. In terms of biological role, catalyzes the reversible conversion of 2-phosphoglycerate (2-PG) into phosphoenolpyruvate (PEP). It is essential for the degradation of carbohydrates via glycolysis. In Rhodopseudomonas palustris (strain BisB5), this protein is Enolase.